The sequence spans 72 residues: Cytochrome c oxidase subunit 8C, mitochondrial (72 aa).

A mitochondrion-targeting transit peptide spans 1-29 (MSRLLQFCSSLLRHRVVLFSKPGHSGRLS). Topologically, residues 30–40 (HSESPQNQVLT) are mitochondrial matrix. The chain crosses the membrane as a helical span at residues 41-64 (PTESVVGIVVFFATFFIPAAYVMS). The Mitochondrial intermembrane portion of the chain corresponds to 65–72 (NLKFFKGE).

The protein belongs to the cytochrome c oxidase VIII family. Component of the cytochrome c oxidase (complex IV, CIV), a multisubunit enzyme composed of 14 subunits. The complex is composed of a catalytic core of 3 subunits MT-CO1, MT-CO2 and MT-CO3, encoded in the mitochondrial DNA, and 11 supernumerary subunits COX4I, COX5A, COX5B, COX6A, COX6B, COX6C, COX7A, COX7B, COX7C, COX8 and NDUFA4, which are encoded in the nuclear genome. The complex exists as a monomer or a dimer and forms supercomplexes (SCs) in the inner mitochondrial membrane with NADH-ubiquinone oxidoreductase (complex I, CI) and ubiquinol-cytochrome c oxidoreductase (cytochrome b-c1 complex, complex III, CIII), resulting in different assemblies (supercomplex SCI(1)III(2)IV(1) and megacomplex MCI(2)III(2)IV(2)).

It localises to the mitochondrion inner membrane. It participates in energy metabolism; oxidative phosphorylation. In terms of biological role, component of the cytochrome c oxidase, the last enzyme in the mitochondrial electron transport chain which drives oxidative phosphorylation. The respiratory chain contains 3 multisubunit complexes succinate dehydrogenase (complex II, CII), ubiquinol-cytochrome c oxidoreductase (cytochrome b-c1 complex, complex III, CIII) and cytochrome c oxidase (complex IV, CIV), that cooperate to transfer electrons derived from NADH and succinate to molecular oxygen, creating an electrochemical gradient over the inner membrane that drives transmembrane transport and the ATP synthase. Cytochrome c oxidase is the component of the respiratory chain that catalyzes the reduction of oxygen to water. Electrons originating from reduced cytochrome c in the intermembrane space (IMS) are transferred via the dinuclear copper A center (CU(A)) of subunit 2 and heme A of subunit 1 to the active site in subunit 1, a binuclear center (BNC) formed by heme A3 and copper B (CU(B)). The BNC reduces molecular oxygen to 2 water molecules using 4 electrons from cytochrome c in the IMS and 4 protons from the mitochondrial matrix. The protein is Cytochrome c oxidase subunit 8C, mitochondrial (Cox8c) of Rattus norvegicus (Rat).